The chain runs to 280 residues: Coiled-coil domain-containing protein 106 (280 aa).

A coiled-coil region spans residues 63–101 (TQLHMALERNSWLQKRIEDLEEERDFLRCQLDKFISSAR). Basic and acidic residues predominate over residues 103-121 (EAEDHCRMKPGPRRMEGDS). The disordered stretch occupies residues 103–176 (EAEDHCRMKP…KPKARERQRV (74 aa)). Phosphoserine is present on Ser-130. A compositionally biased stretch (low complexity) spans 133 to 146 (ESAASSLSGASEEG). A Bipartite nuclear localization signal motif is present at residues 151–164 (RRRQKQKGGASRRR). The span at 152-168 (RRQKQKGGASRRRFGKP) shows a compositional bias: basic residues.

As to quaternary structure, interacts with p53/TP53.

Its subcellular location is the nucleus. Promotes the degradation of p53/TP53 protein and inhibits its transactivity. The sequence is that of Coiled-coil domain-containing protein 106 (CCDC106) from Homo sapiens (Human).